Here is a 182-residue protein sequence, read N- to C-terminus: ATP-dependent protease subunit HslV (182 aa).

The active site involves Thr-6. Ala-164, Cys-167, and Thr-170 together coordinate Na(+).

Belongs to the peptidase T1B family. HslV subfamily. As to quaternary structure, a double ring-shaped homohexamer of HslV is capped on each side by a ring-shaped HslU homohexamer. The assembly of the HslU/HslV complex is dependent on binding of ATP.

It localises to the cytoplasm. The enzyme catalyses ATP-dependent cleavage of peptide bonds with broad specificity.. Allosterically activated by HslU binding. Protease subunit of a proteasome-like degradation complex believed to be a general protein degrading machinery. This is ATP-dependent protease subunit HslV from Borreliella afzelii (strain PKo) (Borrelia afzelii).